A 291-amino-acid polypeptide reads, in one-letter code: Small ribosomal subunit biogenesis GTPase RsgA (291 aa).

One can recognise a CP-type G domain in the interval 63-221 (KNELKRPPVS…IADTPGFSAL (159 aa)). Residues 112–115 (TKKD) and 164–172 (GQSGVGKST) contribute to the GTP site. Zn(2+) contacts are provided by Cys245, Cys250, His252, and Cys258.

The protein belongs to the TRAFAC class YlqF/YawG GTPase family. RsgA subfamily. As to quaternary structure, monomer. Associates with 30S ribosomal subunit, binds 16S rRNA. It depends on Zn(2+) as a cofactor.

Its subcellular location is the cytoplasm. In terms of biological role, one of several proteins that assist in the late maturation steps of the functional core of the 30S ribosomal subunit. Helps release RbfA from mature subunits. May play a role in the assembly of ribosomal proteins into the subunit. Circularly permuted GTPase that catalyzes slow GTP hydrolysis, GTPase activity is stimulated by the 30S ribosomal subunit. The chain is Small ribosomal subunit biogenesis GTPase RsgA from Staphylococcus aureus (strain MRSA252).